The following is a 61-amino-acid chain: Small ribosomal subunit protein uS14B (61 aa).

4 residues coordinate Zn(2+): Cys-24, Cys-27, Cys-40, and Cys-43.

This sequence belongs to the universal ribosomal protein uS14 family. Zinc-binding uS14 subfamily. Part of the 30S ribosomal subunit. Contacts proteins S3 and S10. Requires Zn(2+) as cofactor.

In terms of biological role, binds 16S rRNA, required for the assembly of 30S particles and may also be responsible for determining the conformation of the 16S rRNA at the A site. This is Small ribosomal subunit protein uS14B from Bacillus licheniformis (strain ATCC 14580 / DSM 13 / JCM 2505 / CCUG 7422 / NBRC 12200 / NCIMB 9375 / NCTC 10341 / NRRL NRS-1264 / Gibson 46).